Reading from the N-terminus, the 237-residue chain is MPVLVLLRHGQSQWNLENRFTGWVDVDLTAEGEAQARKGGELIKAAGINLDEAFTSVQTRAIRTGNLALDAAGQSFVPVTKDWRLNERHYGGLTGLNKAETAQKHGEEQVTIWRRSYDIPPPPLAPGGEYDFGKDRRYAGKDLPDTESLKTTLTRVLPYWETAIAPKLKAGETILVAAHGNSLRAIVKHLFDVPDDKIVHVEIPTGNPLVIDLDADLKPTGARYLDAARAQPLPAVG.

Residues 8-15 (RHGQSQWN), 21-22 (TG), Arg60, 87-90 (ERHY), Lys98, 114-115 (RR), and 180-181 (GN) each bind substrate. The active-site Tele-phosphohistidine intermediate is the His9. The active-site Proton donor/acceptor is the Glu87.

This sequence belongs to the phosphoglycerate mutase family. BPG-dependent PGAM subfamily. Homodimer.

The catalysed reaction is (2R)-2-phosphoglycerate = (2R)-3-phosphoglycerate. It participates in carbohydrate degradation; glycolysis; pyruvate from D-glyceraldehyde 3-phosphate: step 3/5. In terms of biological role, catalyzes the interconversion of 2-phosphoglycerate and 3-phosphoglycerate. This is 2,3-bisphosphoglycerate-dependent phosphoglycerate mutase from Caulobacter sp. (strain K31).